A 453-amino-acid chain; its full sequence is UDP-glucosyltransferase avaP (453 aa).

The protein belongs to the UDP-glycosyltransferase family.

The protein operates within secondary metabolite biosynthesis. Functionally, UDP-glucosyltransferase; part of the cluster that mediates the biosynthesis of a highly modified cyclo-arginine-tryptophan dipeptide (cRW). The first step of the pathway is perfornmed by the arginine-containing cyclodipeptide synthase (RCPDS) avaA that acts as the scaffold-generating enzyme and is responsible for formation of the cyclo-Arg-Trp (cRW) diketopiperazine. AvaB then acts as a multifunctional flavoenzyme that is responsible for generating the cyclo-Arg-formylkynurenine DKP, which can be deformylated by avaC. AvaB then further catalyzes an additional N-oxidation followed by cyclization and dehydration. The next step is an N-acetylation of the guanidine group catalyzed by the arginine N-acetyltransferase avaD. The roles of the additional enzymes identified within the ava cluster still have to be determined. This chain is UDP-glucosyltransferase avaP, found in Aspergillus versicolor.